The following is a 364-amino-acid chain: MSYREVSRVLIMAGGTGGHVVPALSLARALRARGVSVEWLGSPRGIENRLVPAADIVLHRIQVAGLRGNGMAGWLLAPWRLAKAVWQARQVIAKFDPQLVVGLGGFASGPGGLAAWLMRRRLIVHEQNAVAGMTNRYLSRLADGVYAAFPGAFGAHRAEVVGNPVRDDIAALGETPRGSDALRQRPLRLLVLGGSLGAQALNTQVPQALARLPAAQRPDVRHQAGRDKETATQSVYAEAGVEAEVSAFIDDMAAAYDWADLIVCRAGALTIAELAAAAKPSILVPFPHAVDDHQTLNARQLVDAGAARLMPQTQLTAESLAETLATLLEPETLATMATSARAQARLDAVERLVAGCMEANRDSQ.

UDP-N-acetyl-alpha-D-glucosamine contacts are provided by residues 16–18, N128, R166, S195, I249, and Q294; that span reads TGG.

The protein belongs to the glycosyltransferase 28 family. MurG subfamily.

It localises to the cell inner membrane. It catalyses the reaction di-trans,octa-cis-undecaprenyl diphospho-N-acetyl-alpha-D-muramoyl-L-alanyl-D-glutamyl-meso-2,6-diaminopimeloyl-D-alanyl-D-alanine + UDP-N-acetyl-alpha-D-glucosamine = di-trans,octa-cis-undecaprenyl diphospho-[N-acetyl-alpha-D-glucosaminyl-(1-&gt;4)]-N-acetyl-alpha-D-muramoyl-L-alanyl-D-glutamyl-meso-2,6-diaminopimeloyl-D-alanyl-D-alanine + UDP + H(+). It participates in cell wall biogenesis; peptidoglycan biosynthesis. In terms of biological role, cell wall formation. Catalyzes the transfer of a GlcNAc subunit on undecaprenyl-pyrophosphoryl-MurNAc-pentapeptide (lipid intermediate I) to form undecaprenyl-pyrophosphoryl-MurNAc-(pentapeptide)GlcNAc (lipid intermediate II). This chain is UDP-N-acetylglucosamine--N-acetylmuramyl-(pentapeptide) pyrophosphoryl-undecaprenol N-acetylglucosamine transferase, found in Chromohalobacter salexigens (strain ATCC BAA-138 / DSM 3043 / CIP 106854 / NCIMB 13768 / 1H11).